We begin with the raw amino-acid sequence, 215 residues long: Cytochrome b6 (215 aa).

The helical transmembrane segment at 32–52 (IFYCLGGITLTCFLVQVATGF) threads the bilayer. Cys-35 is a heme c binding site. Residues His-86 and His-100 each contribute to the heme b site. Transmembrane regions (helical) follow at residues 90 to 110 (ASMM…TGGF), 116 to 136 (LTWV…VTGY), and 186 to 206 (LHTF…FPMI). Heme b is bound by residues His-187 and His-202.

It belongs to the cytochrome b family. PetB subfamily. In terms of assembly, the 4 large subunits of the cytochrome b6-f complex are cytochrome b6, subunit IV (17 kDa polypeptide, PetD), cytochrome f and the Rieske protein, while the 4 small subunits are PetG, PetL, PetM and PetN. The complex functions as a dimer. Requires heme b as cofactor. It depends on heme c as a cofactor.

The protein resides in the plastid. It localises to the chloroplast thylakoid membrane. Functionally, component of the cytochrome b6-f complex, which mediates electron transfer between photosystem II (PSII) and photosystem I (PSI), cyclic electron flow around PSI, and state transitions. The polypeptide is Cytochrome b6 (Populus alba (White poplar)).